We begin with the raw amino-acid sequence, 354 residues long: Histidinol-phosphate aminotransferase (354 aa).

K215 is modified (N6-(pyridoxal phosphate)lysine).

The protein belongs to the class-II pyridoxal-phosphate-dependent aminotransferase family. Histidinol-phosphate aminotransferase subfamily. Homodimer. Requires pyridoxal 5'-phosphate as cofactor.

The catalysed reaction is L-histidinol phosphate + 2-oxoglutarate = 3-(imidazol-4-yl)-2-oxopropyl phosphate + L-glutamate. Its pathway is amino-acid biosynthesis; L-histidine biosynthesis; L-histidine from 5-phospho-alpha-D-ribose 1-diphosphate: step 7/9. The polypeptide is Histidinol-phosphate aminotransferase (Vesicomyosocius okutanii subsp. Calyptogena okutanii (strain HA)).